Here is a 521-residue protein sequence, read N- to C-terminus: Cytochrome P450 monooxygenase 105 (521 aa).

A helical membrane pass occupies residues 12-32 (GVASPATLAVAAVTFLTALVL). N-linked (GlcNAc...) asparagine glycans are attached at residues asparagine 218, asparagine 274, and asparagine 317. Residue cysteine 449 participates in heme binding.

This sequence belongs to the cytochrome P450 family. Heme serves as cofactor.

The protein resides in the membrane. The protein operates within secondary metabolite biosynthesis. Functionally, cytochrome P450 monooxygenase that is able to use anthracene, carbazole, pyrene, phenanthrene and trans-stilbene as substrates for oxidation. These multifunctional properties against a series of polycyclic aromatic hydrocarbons (PAHs) suggest that CYP105 would play important roles, at least in part, in fungal metabolic systems involved in xenobiotic detoxification. In Postia placenta (strain ATCC 44394 / Madison 698-R) (Brown rot fungus), this protein is Cytochrome P450 monooxygenase 105.